Here is a 242-residue protein sequence, read N- to C-terminus: NH(3)-dependent NAD(+) synthetase (242 aa).

27–34 (GISGGIDS) serves as a coordination point for ATP. D33 serves as a coordination point for Mg(2+). Residue R109 participates in deamido-NAD(+) binding. T129 lines the ATP pocket. Position 134 (E134) interacts with Mg(2+). Residues K142 and D149 each contribute to the deamido-NAD(+) site. Positions 158 and 180 each coordinate ATP. 231-232 (HK) contributes to the deamido-NAD(+) binding site.

Belongs to the NAD synthetase family. Homodimer.

The catalysed reaction is deamido-NAD(+) + NH4(+) + ATP = AMP + diphosphate + NAD(+) + H(+). The protein operates within cofactor biosynthesis; NAD(+) biosynthesis; NAD(+) from deamido-NAD(+) (ammonia route): step 1/1. In terms of biological role, catalyzes the ATP-dependent amidation of deamido-NAD to form NAD. Uses ammonia as a nitrogen source. In Thermoplasma volcanium (strain ATCC 51530 / DSM 4299 / JCM 9571 / NBRC 15438 / GSS1), this protein is NH(3)-dependent NAD(+) synthetase.